The primary structure comprises 54 residues: Ribulose bisphosphate carboxylase large chain (54 aa).

A propeptide spanning residues 1–2 (MS) is cleaved from the precursor. Pro-3 carries the N-acetylproline modification. At Lys-14 the chain carries N6,N6,N6-trimethyllysine.

This sequence belongs to the RuBisCO large chain family. Type I subfamily. Heterohexadecamer of 8 large chains and 8 small chains.

It localises to the plastid. Its subcellular location is the chloroplast. It catalyses the reaction 2 (2R)-3-phosphoglycerate + 2 H(+) = D-ribulose 1,5-bisphosphate + CO2 + H2O. The enzyme catalyses D-ribulose 1,5-bisphosphate + O2 = 2-phosphoglycolate + (2R)-3-phosphoglycerate + 2 H(+). In terms of biological role, ruBisCO catalyzes two reactions: the carboxylation of D-ribulose 1,5-bisphosphate, the primary event in carbon dioxide fixation, as well as the oxidative fragmentation of the pentose substrate in the photorespiration process. Both reactions occur simultaneously and in competition at the same active site. In Ilex ciliospinosa (Sichuan holly), this protein is Ribulose bisphosphate carboxylase large chain (rbcL).